The chain runs to 324 residues: Glyceraldehyde-3-phosphate dehydrogenase 1 (324 aa).

Residues 13-14, aspartate 35, and lysine 85 each bind NAD(+); that span reads RI. Residues 157–159, threonine 188, 217–218, and arginine 240 contribute to the D-glyceraldehyde 3-phosphate site; these read SCT and TG. The active-site Nucleophile is cysteine 158. Asparagine 322 provides a ligand contact to NAD(+).

This sequence belongs to the glyceraldehyde-3-phosphate dehydrogenase family. In terms of assembly, homotetramer.

It localises to the cytoplasm. The enzyme catalyses D-glyceraldehyde 3-phosphate + phosphate + NAD(+) = (2R)-3-phospho-glyceroyl phosphate + NADH + H(+). It participates in carbohydrate degradation; glycolysis; pyruvate from D-glyceraldehyde 3-phosphate: step 1/5. The protein is Glyceraldehyde-3-phosphate dehydrogenase 1 (GPD-1) of Globodera rostochiensis (Golden nematode worm).